The chain runs to 137 residues: Basic phospholipase A2 2 (137 aa).

Positions 1-11 (LVAVCVSLLGA) are cleaved as a signal peptide. Residues 12–19 (ANIPPQPL) constitute a propeptide that is removed on maturation. 7 disulfide bridges follow: cysteine 30–cysteine 89, cysteine 44–cysteine 136, cysteine 46–cysteine 62, cysteine 61–cysteine 117, cysteine 68–cysteine 110, cysteine 78–cysteine 103, and cysteine 96–cysteine 108. Tyrosine 45 and glycine 47 together coordinate Ca(2+). Tyrosine 48 contributes to the alpha-D-mannopyranose binding site. Residue glycine 49 participates in Ca(2+) binding. Residue histidine 65 is part of the active site. Aspartate 66 provides a ligand contact to Ca(2+). Aspartate 66 contacts alpha-D-mannopyranose. Residue aspartate 111 is part of the active site.

Belongs to the phospholipase A2 family. Group I subfamily. D49 sub-subfamily. In terms of assembly, homodimer; non-covalently linked. Ca(2+) serves as cofactor. In terms of processing, homodimerization and interaction of the catalytically important Asp-49 (here Asp-111) with mannose molecules may render this protein inactive. Expressed by the venom gland.

Its subcellular location is the secreted. The enzyme catalyses a 1,2-diacyl-sn-glycero-3-phosphocholine + H2O = a 1-acyl-sn-glycero-3-phosphocholine + a fatty acid + H(+). In terms of biological role, snake venom phospholipase A2 (PLA2) that shows anticoagulant and neurotoxic activities. Its function is as follows. PLA2 catalyzes the calcium-dependent hydrolysis of the 2-acyl groups in 3-sn-phosphoglycerides. In Bungarus caeruleus (Indian krait), this protein is Basic phospholipase A2 2.